Here is a 255-residue protein sequence, read N- to C-terminus: MDRLVIGGRELKNRLFIGSGKFADERVIRDIVAQTGVEVVTVALRRVSLSGDGENILHCIPKECVLLPNTSGARTAEEAIRIARLARAAGCGNWVKIEVISDNKYLLPDNNETIKATGVLAEEGFVVLPYMHPDLYAAKELERAGAAAVMPLGAPIGTNRGLKTKEIVRILIEECSVPVIVDAGIGKPSEAAEAMEMGAAACLVNTAIATAGDPLVMARAFSQAVAAGRLAYLAQPGERTEYARASSPLTGFLGS.

Lys-96 acts as the Schiff-base intermediate with DXP in catalysis. 1-deoxy-D-xylulose 5-phosphate is bound by residues Gly-157, 183-184, and 205-206; these read AG and NT.

It belongs to the ThiG family. Homotetramer. Forms heterodimers with either ThiH or ThiS.

The protein localises to the cytoplasm. It carries out the reaction [ThiS sulfur-carrier protein]-C-terminal-Gly-aminoethanethioate + 2-iminoacetate + 1-deoxy-D-xylulose 5-phosphate = [ThiS sulfur-carrier protein]-C-terminal Gly-Gly + 2-[(2R,5Z)-2-carboxy-4-methylthiazol-5(2H)-ylidene]ethyl phosphate + 2 H2O + H(+). The protein operates within cofactor biosynthesis; thiamine diphosphate biosynthesis. Its function is as follows. Catalyzes the rearrangement of 1-deoxy-D-xylulose 5-phosphate (DXP) to produce the thiazole phosphate moiety of thiamine. Sulfur is provided by the thiocarboxylate moiety of the carrier protein ThiS. In vitro, sulfur can be provided by H(2)S. In Heliobacterium modesticaldum (strain ATCC 51547 / Ice1), this protein is Thiazole synthase.